Consider the following 175-residue polypeptide: Di-N-acetylchitobiase (175 aa).

Residues 1-38 (MARLQLAGSRRLVPLPRRAPRLAPLLLPLLLALPDGAR) form the signal peptide. The GH18 domain occupies 39 to 175 (ADCPCKVPAL…SFHHEIKGSQ (137 aa)). An N-linked (GlcNAc...) asparagine glycan is attached at N115. Residue E143 is the Proton donor of the active site.

This sequence belongs to the glycosyl hydrolase 18 family.

It localises to the lysosome. Involved in the degradation of asparagine-linked glycoproteins. Hydrolyze of N-acetyl-beta-D-glucosamine (1-4)N-acetylglucosamine chitobiose core from the reducing end of the bond, it requires prior cleavage by glycosylasparaginase. The sequence is that of Di-N-acetylchitobiase (CTBS) from Bos taurus (Bovine).